We begin with the raw amino-acid sequence, 1140 residues long: Eukaryotic translation initiation factor 3 subunit A (1140 aa).

The PCI domain occupies leucine 319–threonine 502. Composition is skewed to basic and acidic residues over residues asparagine 590–glutamate 624, arginine 826–glycine 903, aspartate 925–glutamate 965, serine 1000–asparagine 1019, arginine 1026–arginine 1053, and aspartate 1061–arginine 1087. Disordered stretches follow at residues asparagine 590–isoleucine 632 and arginine 826–arginine 1140. A compositionally biased stretch (gly residues) spans proline 1091–asparagine 1101. Residues proline 1108–aspartate 1130 are compositionally biased toward basic and acidic residues.

It belongs to the eIF-3 subunit A family. Component of the eukaryotic translation initiation factor 3 (eIF-3) complex. The eIF-3 complex interacts with pix.

It is found in the cytoplasm. Functionally, RNA-binding component of the eukaryotic translation initiation factor 3 (eIF-3) complex, which is involved in protein synthesis of a specialized repertoire of mRNAs and, together with other initiation factors, stimulates binding of mRNA and methionyl-tRNAi to the 40S ribosome. The eIF-3 complex specifically targets and initiates translation of a subset of mRNAs involved in cell proliferation. This Drosophila willistoni (Fruit fly) protein is Eukaryotic translation initiation factor 3 subunit A.